The chain runs to 855 residues: Discoidin domain-containing receptor 2 (855 aa).

A signal peptide spans 1–21 (MILIPRMLLVLFLLLPILSSA). Residues 22 to 399 (KAQVNPAICR…MLKVDDSNTR (378 aa)) lie on the Extracellular side of the membrane. The region spanning 30-185 (CRYPLGMSGG…VCMRVELYGC (156 aa)) is the F5/8 type C domain. Cystine bridges form between Cys-30-Cys-185 and Cys-73-Cys-177. 5 N-linked (GlcNAc...) asparagine glycosylation sites follow: Asn-121, Asn-213, Asn-261, Asn-280, and Asn-372. Residues 400 to 421 (ILIGCLVAIIFILLAIIVIILW) traverse the membrane as a helical segment. The Cytoplasmic segment spans residues 422 to 855 (RQFWQKMLEK…HLLLLQQGDE (434 aa)). A disordered region spans residues 452-471 (SMFNNNRSSSPSEQGSNSTY). Tyr-471 bears the Phosphotyrosine; by SRC and autocatalysis mark. One can recognise a Protein kinase domain in the interval 563–849 (LTFKEKLGEG…PSFQEIHLLL (287 aa)). ATP is bound by residues 569-577 (LGEGQFGEV) and Lys-608. The Proton acceptor role is filled by Asp-710. 3 positions are modified to phosphotyrosine; by SRC and autocatalysis: Tyr-736, Tyr-740, and Tyr-741.

It belongs to the protein kinase superfamily. Tyr protein kinase family. Insulin receptor subfamily. In terms of assembly, binds hydroxyproline-rich sequence motifs in fibrillar, glycosylated collagen, such as the GQOGVMGFO motif, where O stands for hydroxyproline. Interacts with SRC. Interacts (tyrosine phosphorylated) with SHC1. Post-translationally, N-glycosylated. Tyrosine phosphorylated in response to collagen binding. Phosphorylated by SRC; this is required for activation and subsequent autophosphorylation on additional tyrosine residues. Detected in osteocytes, osteoblastic cells in subchondral bone, bone lining cells, tibia and cartilage (at protein level). Detected at high levels in heart and lung, and at low levels in brain, placenta, liver, skeletal muscle, pancreas, and kidney.

The protein localises to the cell membrane. The catalysed reaction is L-tyrosyl-[protein] + ATP = O-phospho-L-tyrosyl-[protein] + ADP + H(+). Present in an inactive state in the absence of collagen binding and phosphorylation by SRC. Tyrosine phosphorylation enhances the affinity for ATP and the catalytic activity. Tyrosine kinase involved in the regulation of tissues remodeling. It functions as a cell surface receptor for fibrillar collagen and regulates cell differentiation, remodeling of the extracellular matrix, cell migration and cell proliferation. Required for normal bone development. Regulates osteoblast differentiation and chondrocyte maturation via a signaling pathway that involves MAP kinases and leads to the activation of the transcription factor RUNX2. Regulates remodeling of the extracellular matrix by up-regulation of the collagenases MMP1, MMP2 and MMP13, and thereby facilitates cell migration and tumor cell invasion. Promotes fibroblast migration and proliferation, and thereby contributes to cutaneous wound healing. This is Discoidin domain-containing receptor 2 (DDR2) from Homo sapiens (Human).